We begin with the raw amino-acid sequence, 317 residues long: UV DNA damage endonuclease (317 aa).

Belongs to the uve1/UvsE family.

Component in a DNA repair pathway. Removal of UV LIGHT damaged nucleotides. Recognizes pyrimidine dimers and cleave a phosphodiester bond immediately 5' to the lesion. The chain is UV DNA damage endonuclease from Bacillus anthracis (strain A0248).